Reading from the N-terminus, the 498-residue chain is PHD finger protein 10 (498 aa).

Over residues M1–A10 the composition is skewed to low complexity. The tract at residues M1–Q62 is disordered. An N-acetylalanine modification is found at A2. Phosphoserine occurs at positions 12, 36, and 50. Residues M89–Q185 are essential to induce neural progenitor proliferation. Positions M89–L295 are SAY. A Glycyl lysine isopeptide (Lys-Gly) (interchain with G-Cter in SUMO2) cross-link involves residue K241. S270 bears the Phosphoserine mark. The segment covering E285 to D296 has biased composition (low complexity). The interval E285–P368 is disordered. The tract at residues L292–D334 is essential to induce neural progenitor proliferation. A phosphoserine mark is found at S297, S301, S327, and S331. Polar residues predominate over residues T318–E328. Basic and acidic residues predominate over residues K345 to K359. A PHD-type 1; degenerate zinc finger spans residues I379 to C436. Residue K385 forms a Glycyl lysine isopeptide (Lys-Gly) (interchain with G-Cter in SUMO2) linkage. A PHD-type 2; degenerate zinc finger spans residues I438–A481.

This sequence belongs to the SAYP family. As to quaternary structure, component of neural progenitors-specific chromatin remodeling complex (npBAF complex) composed of at least, ARID1A/BAF250A or ARID1B/BAF250B, SMARCD1/BAF60A, SMARCD3/BAF60C, SMARCA2/BRM/BAF190B, SMARCA4/BRG1/BAF190A, SMARCB1/BAF47, SMARCC1/BAF155, SMARCE1/BAF57, SMARCC2/BAF170, PHF10/BAF45A, ACTL6A/BAF53A and actin. Interacts with ACTL6A/BAF53A, SMARCA2/BRM/BAF190B, SMARCA4/BRG1/BAF190A and PBRM1/BAF180.

Its subcellular location is the nucleus. Its function is as follows. Involved in transcription activity regulation by chromatin remodeling. Belongs to the neural progenitors-specific chromatin remodeling complex (npBAF complex) and is required for the proliferation of neural progenitors. During neural development a switch from a stem/progenitor to a post-mitotic chromatin remodeling mechanism occurs as neurons exit the cell cycle and become committed to their adult state. The transition from proliferating neural stem/progenitor cells to post-mitotic neurons requires a switch in subunit composition of the npBAF and nBAF complexes. As neural progenitors exit mitosis and differentiate into neurons, npBAF complexes which contain ACTL6A/BAF53A and PHF10/BAF45A, are exchanged for homologous alternative ACTL6B/BAF53B and DPF1/BAF45B or DPF3/BAF45C subunits in neuron-specific complexes (nBAF). The npBAF complex is essential for the self-renewal/proliferative capacity of the multipotent neural stem cells. The nBAF complex along with CREST plays a role regulating the activity of genes essential for dendrite growth. This chain is PHD finger protein 10 (PHF10), found in Homo sapiens (Human).